The following is a 386-amino-acid chain: MTIIVDYRFPPAINAEKQAKTIAIGQTAGTWSERHSHRQKQLQQHLAEVVGIREEADGYKVARVRFPQINVENDIASLLTMIFGKYSMAGAGKVVGVYLPESYGTKAKLGITGIRQRLGVYDRPLVMAIFKPALGLSAQDHADILREVAFAGLDVIKDDEIMADLPVAPTHERLDCCRRVLEEVRQQTGRNVLYAVNVTGKADELQRKARLLVKHGANALLLNVLTYGFSVLEALASDPAIDVPIFAHPAFAGAMCAGSDTGLAYSVVLGTMMAHAGADAVLYPAAYGSLPFDPQEEGKIRDILRDRNVFPVPSAGIRPGIVPQVLGDYGRNVILNAGTGIMDHPSGPASGVRAFFEALARIEAGESFDPANLPEGALKQAILEWG.

The Proton acceptor role is filled by K85. Substrate is bound by residues K131, 157-160 (KDDE), H248, G316, and 338-339 (GT). Mg(2+) contacts are provided by K157, D159, and E160. N6-carboxylysine is present on K157.

It belongs to the RuBisCO large chain family. Type IV subfamily. Homodimer. It depends on Mg(2+) as a cofactor.

The catalysed reaction is 5-methylsulfanyl-2,3-dioxopentyl phosphate = 2-hydroxy-5-methylsulfanyl-3-oxopent-1-enyl phosphate. The protein operates within amino-acid biosynthesis; L-methionine biosynthesis via salvage pathway; L-methionine from S-methyl-5-thio-alpha-D-ribose 1-phosphate: step 3/6. In terms of biological role, catalyzes the enolization of 2,3-diketo-5-methylthiopentyl-1-phosphate (DK-MTP-1-P) into 2-hydroxy-3-keto-5-methylthiopentenyl-1-phosphate (HK-MTPenyl-1-P). The sequence is that of 2,3-diketo-5-methylthiopentyl-1-phosphate enolase (mtnW) from Microcystis aeruginosa.